We begin with the raw amino-acid sequence, 192 residues long: dTTP/UTP pyrophosphatase (192 aa).

The active-site Proton acceptor is D70.

The protein belongs to the Maf family. YhdE subfamily. It depends on a divalent metal cation as a cofactor.

The protein resides in the cytoplasm. The enzyme catalyses dTTP + H2O = dTMP + diphosphate + H(+). It carries out the reaction UTP + H2O = UMP + diphosphate + H(+). In terms of biological role, nucleoside triphosphate pyrophosphatase that hydrolyzes dTTP and UTP. May have a dual role in cell division arrest and in preventing the incorporation of modified nucleotides into cellular nucleic acids. This chain is dTTP/UTP pyrophosphatase, found in Clostridium perfringens (strain SM101 / Type A).